The sequence spans 1734 residues: Protein TIC 214 (1734 aa).

The next 6 helical transmembrane spans lie at 19–39 (IINS…FSIG), 68–88 (FIAG…HLAL), 91–111 (PHTI…WNNH), 133–153 (VFLN…SSML), 176–196 (VGWL…LVWI), and 227–247 (IFSI…PSPI). Residues 1433 to 1485 (NLNNEEKELADEVELESDNEKQINPESALSNQEKTIQEIYAESKKKKRQNKKQ) adopt a coiled-coil conformation.

This sequence belongs to the TIC214 family. Part of the Tic complex.

Its subcellular location is the plastid. The protein resides in the chloroplast inner membrane. Its function is as follows. Involved in protein precursor import into chloroplasts. May be part of an intermediate translocation complex acting as a protein-conducting channel at the inner envelope. This Lepidium virginicum (Virginia pepperweed) protein is Protein TIC 214.